Here is a 66-residue protein sequence, read N- to C-terminus: Large ribosomal subunit protein bL33c (66 aa).

It belongs to the bacterial ribosomal protein bL33 family.

Its subcellular location is the plastid. It localises to the chloroplast. This is Large ribosomal subunit protein bL33c from Arabis hirsuta (Hairy rock-cress).